Here is a 1417-residue protein sequence, read N- to C-terminus: DExH-box ATP-dependent RNA helicase DExH4, chloroplastic (1417 aa).

Residues 1–12 (MAPTKKPQKNKQ) show a composition bias toward basic residues. Positions 1–37 (MAPTKKPQKNKQSKNEIASSLIPNSGHKKPSKAPKLL) are disordered. The transit peptide at 1 to 61 (MAPTKKPQKN…NFRRTPSPVT (61 aa)) directs the protein to the chloroplast. The Helicase ATP-binding domain occupies 607–781 (LQKLKEKDVL…FGQCPIITAQ (175 aa)). An ATP-binding site is contributed by 620 to 627 (GETGSGKT). The short motif at 722 to 725 (DEVH) is the DEIH box element. The Helicase C-terminal domain maps to 868-1043 (LLEELICHID…ELCLHIKLLG (176 aa)).

It belongs to the DExH box helicase family.

Its subcellular location is the plastid. It localises to the chloroplast. The enzyme catalyses ATP + H2O = ADP + phosphate + H(+). This chain is DExH-box ATP-dependent RNA helicase DExH4, chloroplastic, found in Arabidopsis thaliana (Mouse-ear cress).